The sequence spans 545 residues: Probable protein kinase UbiB (545 aa).

The Protein kinase domain maps to 123–501 (DFEPIALASA…QIKQRQSQYL (379 aa)). ATP contacts are provided by residues 129 to 137 (LASASIAQV) and Lys-152. The Proton acceptor role is filled by Asp-287. Residues 508 to 528 (LFLCGSLFLLSGLANIPWLFI) form a helical membrane-spanning segment.

Belongs to the ABC1 family. UbiB subfamily.

It localises to the cell inner membrane. It participates in cofactor biosynthesis; ubiquinone biosynthesis [regulation]. Is probably a protein kinase regulator of UbiI activity which is involved in aerobic coenzyme Q (ubiquinone) biosynthesis. The chain is Probable protein kinase UbiB from Photorhabdus laumondii subsp. laumondii (strain DSM 15139 / CIP 105565 / TT01) (Photorhabdus luminescens subsp. laumondii).